We begin with the raw amino-acid sequence, 366 residues long: Chorismate synthase (366 aa).

Arg48 is an NADP(+) binding site. Residues 125-127 (RSS), 241-242 (NA), Gly285, 300-304 (KPTSS), and Arg326 contribute to the FMN site.

It belongs to the chorismate synthase family. In terms of assembly, homotetramer. It depends on FMNH2 as a cofactor.

The enzyme catalyses 5-O-(1-carboxyvinyl)-3-phosphoshikimate = chorismate + phosphate. Its pathway is metabolic intermediate biosynthesis; chorismate biosynthesis; chorismate from D-erythrose 4-phosphate and phosphoenolpyruvate: step 7/7. In terms of biological role, catalyzes the anti-1,4-elimination of the C-3 phosphate and the C-6 proR hydrogen from 5-enolpyruvylshikimate-3-phosphate (EPSP) to yield chorismate, which is the branch point compound that serves as the starting substrate for the three terminal pathways of aromatic amino acid biosynthesis. This reaction introduces a second double bond into the aromatic ring system. This Roseobacter denitrificans (strain ATCC 33942 / OCh 114) (Erythrobacter sp. (strain OCh 114)) protein is Chorismate synthase.